Reading from the N-terminus, the 459-residue chain is ATP synthase subunit beta (459 aa).

148–155 provides a ligand contact to ATP; sequence GGAGVGKT.

This sequence belongs to the ATPase alpha/beta chains family. As to quaternary structure, F-type ATPases have 2 components, CF(1) - the catalytic core - and CF(0) - the membrane proton channel. CF(1) has five subunits: alpha(3), beta(3), gamma(1), delta(1), epsilon(1). CF(0) has three main subunits: a(1), b(2) and c(9-12). The alpha and beta chains form an alternating ring which encloses part of the gamma chain. CF(1) is attached to CF(0) by a central stalk formed by the gamma and epsilon chains, while a peripheral stalk is formed by the delta and b chains.

It is found in the cell inner membrane. The catalysed reaction is ATP + H2O + 4 H(+)(in) = ADP + phosphate + 5 H(+)(out). In terms of biological role, produces ATP from ADP in the presence of a proton gradient across the membrane. The catalytic sites are hosted primarily by the beta subunits. This chain is ATP synthase subunit beta, found in Hahella chejuensis (strain KCTC 2396).